A 92-amino-acid chain; its full sequence is Bombyxin A-4 (92 aa).

Positions 1–19 (MKILLAIALMLSTVMWVST) are cleaved as a signal peptide. The residue at position 20 (Gln-20) is a Pyrrolidone carboxylic acid. Intrachain disulfides connect Cys-29–Cys-79, Cys-41–Cys-92, and Cys-78–Cys-83. A propeptide spans 50–70 (SGAQFASYGSAWLMPYSEGRG) (c peptide like).

This sequence belongs to the insulin family. In terms of assembly, heterodimer of a B chain and an A chain linked by two disulfide bonds.

It localises to the secreted. Functionally, brain peptide responsible for activation of prothoracic glands to produce ecdysone in insects. This Bombyx mori (Silk moth) protein is Bombyxin A-4 (BBXA4).